The following is a 497-amino-acid chain: Di-/tripeptide transporter (497 aa).

At 1–36 (MQNLNKTEKTFFGQPRGLLTLFQTEFWERFSYYGMR) the chain is on the cytoplasmic side. The helical transmembrane segment at 37 to 55 (AILVYYLYALTTADNAGLG) threads the bilayer. At 56–64 (LPKAQAMAI) the chain is on the extracellular side. Residues 65 to 83 (VSIYGALVYLSTIVGGWVA) traverse the membrane as a helical segment. The Cytoplasmic segment spans residues 84–92 (DRLLGASRT). A helical transmembrane segment spans residues 93 to 111 (IFLGGILITLGHVALATPF). The Extracellular portion of the chain corresponds to 112–115 (GLSS). The helical transmembrane segment at 116 to 134 (LFVALFLIILGTGMLKPNI) threads the bilayer. At 135 to 154 (SNMVGHLYSKDDSRRDTGFN) the chain is on the cytoplasmic side. A helical transmembrane segment spans residues 155–173 (IFVVGINMGSLIAPLIVGT). Topologically, residues 174–181 (VGQGVNYH) are extracellular. The chain crosses the membrane as a helical span at residues 182-200 (LGFSLAAIGMIFALFAYWY). Residues 201–224 (GRLRHFPEIGREPSNPMDAKAKRN) lie on the Cytoplasmic side of the membrane. Residues 225 to 243 (FIITLTIVLIVALIGFFLI) traverse the membrane as a helical segment. Residues 244 to 254 (YQASPANFINN) lie on the Extracellular side of the membrane. A helical membrane pass occupies residues 255–273 (FINVLSIIGIVVPIIYFVM). The Cytoplasmic segment spans residues 274–293 (MFTSKKVESDERRKLTAYIP). A helical transmembrane segment spans residues 294–312 (LFLSAIVFWAIEEQSSTII). The Extracellular portion of the chain corresponds to 313–335 (AVWGESRSNLNPTWFGFTFHIDP). A helical transmembrane segment spans residues 336-354 (SWYQLLNPLFIVLLSPIFV). The Cytoplasmic segment spans residues 355–372 (RIWNKLGDRQPSTIVKFG). A helical transmembrane segment spans residues 373–391 (LGLMLTGASYLIMTLPGLL). The Extracellular segment spans residues 392–425 (NGTSGRASALWLVLMFAVQMAGELLVSPVGLSVS). The helical transmembrane segment at 426-444 (TKLAPVAFQSQMMAMWFLA) threads the bilayer. Topologically, residues 445–497 (DSTSQAINAQITPIFKAATEVHFFAITGIIGIIVGIILLIIKKPILKLMGDVR) are cytoplasmic.

Belongs to the major facilitator superfamily. Proton-dependent oligopeptide transporter (POT/PTR) (TC 2.A.17) family.

It localises to the cell membrane. Its function is as follows. Proton-dependent uptake of di- or tri-peptides. The polypeptide is Di-/tripeptide transporter (dtpT) (Lactococcus lactis subsp. cremoris (Streptococcus cremoris)).